Here is a 136-residue protein sequence, read N- to C-terminus: uncharacterized protein (136 aa).

The next 2 helical transmembrane spans lie at 36 to 56 (FLLT…IYLI) and 63 to 83 (FAFA…LFLS).

It localises to the cell membrane. This is an uncharacterized protein from Mycoplasma pneumoniae (strain ATCC 29342 / M129 / Subtype 1) (Mycoplasmoides pneumoniae).